The chain runs to 934 residues: Progesterone receptor (934 aa).

The interval 1–49 is disordered; it reads MTELKSKGPRAPHVAGGPPSPEVGSPLLCRPAAGPFQGSQTSDTLPEVS. The interval 1 to 164 is AF3; mediates transcriptional activation; sequence MTELKSKGPR…PATQRVLSPL (164 aa). The modulating, Pro-Rich stretch occupies residues 1–567; it reads MTELKSKGPR…YSFESLPQKI (567 aa). Serine 20 is subject to Phosphoserine. The LXXL motif 1 signature appears at 55–59; sequence LDGLL. The tract at residues 61–239 is disordered; it reads PRLCQGQDPP…EDSAGPLLKG (179 aa). Residue serine 81 is modified to Phosphoserine. The short motif at 115 to 119 is the LXXL motif 2 element; sequence LDTLL. Phosphoserine occurs at positions 130 and 162. Residues 165 to 305 form a mediates transcriptional transrepression region; the sequence is MSRSGGKTED…LATTMMDFIH (141 aa). The short motif at 183–187 is the Nuclear localization signal element; sequence KVLPR. Serine 190 carries the phosphoserine modification. Polar residues predominate over residues 191-203; it reads PSRQLLLPTSGSP. Serine 213 bears the Phosphoserine mark. Acidic residues predominate over residues 220 to 231; that stretch reads EVEEEDGSESED. At serine 294 the chain carries Phosphoserine; by MAPK1. The interval 331–375 is disordered; the sequence is GGAGAASAFAPPQSSPSASSTPVAVGDFPDCAYPPDAEPKDNAYP. Low complexity predominate over residues 335-350; that stretch reads AASAFAPPQSSPSASS. The residue at position 345 (serine 345) is a Phosphoserine; by MAPK. Lysine 388 participates in a covalent cross-link: Glycyl lysine isopeptide (Lys-Gly) (interchain with G-Cter in SUMO); alternate. Lysine 388 is covalently cross-linked (Glycyl lysine isopeptide (Lys-Gly) (interchain with G-Cter in ubiquitin); alternate). Serine 400 carries the phosphoserine; by CDK2 modification. The disordered stretch occupies residues 415–454; that stretch reads PDFPLGPPPQLPPRAPPSRPGEAAVTAAPASASVSSASSP. The segment covering 418 to 433 has biased composition (pro residues); that stretch reads PLGPPPQLPPRAPPSR. The span at 434 to 454 shows a compositional bias: low complexity; sequence PGEAAVTAAPASASVSSASSP. The AF1; mediates transcriptional activation stretch occupies residues 456–547; that stretch reads STLECILYKA…VYPPYLNYLR (92 aa). Lysine 532 is covalently cross-linked (Glycyl lysine isopeptide (Lys-Gly) (interchain with G-Cter in SUMO)). 2 consecutive NR C4-type zinc fingers follow at residues 568 to 588 and 604 to 628; these read CLIC…CGSC and CAGR…LRKC. The nuclear receptor DNA-binding region spans 568–640; the sequence is CLICGDEASG…AGMVLGGRKF (73 aa). Serine 677 carries the phosphoserine modification. One can recognise an NR LBD domain in the interval 680-914; that stretch reads QDIQLIPPLI…EFPEMMSEVI (235 aa). The segment at 688 to 934 is AF2; mediates transcriptional activation; sequence LIKLLMSIEP…MVKPLLFHKK (247 aa). Position 767 (arginine 767) interacts with progesterone.

Belongs to the nuclear hormone receptor family. As to quaternary structure, interacts with SMARD1 and UNC45A. Interacts with CUEDC2; the interaction promotes ubiquitination, decreases sumoylation, and represses transcriptional activity. Interacts with PIAS3; the interaction promotes sumoylation of PR in a hormone-dependent manner, inhibits DNA-binding, and alters nuclear export. Interacts with SP1; the interaction requires ligand-induced phosphorylation on Ser-345 by ERK1/2-MAPK. Interacts with PRMT2. Interacts with NCOA2 and NCOA1. Interacts with KLF9. Interacts with GTF2B. Post-translationally, phosphorylated on multiple serine sites. Several of these sites are hormone-dependent. Phosphorylation on Ser-294 is highly hormone-dependent and modulates ubiquitination and sumoylation on Lys-388. Phosphorylation on Ser-345 also requires induction by hormone. Basal phosphorylation on Ser-81, Ser-162, Ser-190 and Ser-400 is increased in response to progesterone and can be phosphorylated in vitro by the CDK2-A1 complex. Increased levels of phosphorylation on Ser-400 also in the presence of EGF, heregulin, IGF, PMA and FBS. Phosphorylation at this site by CDK2 is ligand-independent, and increases nuclear translocation and transcriptional activity. Phosphorylation at Ser-162 and Ser-294, but not at Ser-190, is impaired during the G(2)/M phase of the cell cycle. Phosphorylation on Ser-345 by ERK1/2 MAPK is required for interaction with SP1. Sumoylation is hormone-dependent and represses transcriptional activity. Sumoylation on all three sites is enhanced by PIAS3. Desumoylated by SENP1. Sumoylation on Lys-388, the main site of sumoylation, is repressed by ubiquitination on the same site, and modulated by phosphorylation at Ser-294. In terms of processing, ubiquitination is hormone-dependent and represses sumoylation on the same site. Promoted by MAPK-mediated phosphorylation on Ser-294. Ubiquitinated by UBR5, leading to its degradation: UBR5 specifically recognizes and binds ligand-bound PGR when it is not associated with coactivators (NCOAs). In presence of NCOAs, the UBR5-degron is not accessible, preventing its ubiquitination and degradation. Post-translationally, palmitoylated by ZDHHC7 and ZDHHC21. Palmitoylation is required for plasma membrane targeting and for rapid intracellular signaling via ERK and AKT kinases and cAMP generation.

Its subcellular location is the nucleus. It is found in the cytoplasm. In terms of biological role, the steroid hormones and their receptors are involved in the regulation of eukaryotic gene expression and affect cellular proliferation and differentiation in target tissues. Transcriptional activator of several progesteron-dependent promoters in a variety of cell types. Involved in activation of SRC-dependent MAPK signaling on hormone stimulation. This Colobus guereza (Mantled guereza) protein is Progesterone receptor (PGR).